Reading from the N-terminus, the 496-residue chain is Probable cytosol aminopeptidase (496 aa).

Mn(2+)-binding residues include Lys268 and Asp273. Lys280 is a catalytic residue. Mn(2+) contacts are provided by Asp291, Asp350, and Glu352. Arg354 is a catalytic residue.

Belongs to the peptidase M17 family. Mn(2+) is required as a cofactor.

It is found in the cytoplasm. The enzyme catalyses Release of an N-terminal amino acid, Xaa-|-Yaa-, in which Xaa is preferably Leu, but may be other amino acids including Pro although not Arg or Lys, and Yaa may be Pro. Amino acid amides and methyl esters are also readily hydrolyzed, but rates on arylamides are exceedingly low.. It carries out the reaction Release of an N-terminal amino acid, preferentially leucine, but not glutamic or aspartic acids.. Its function is as follows. Presumably involved in the processing and regular turnover of intracellular proteins. Catalyzes the removal of unsubstituted N-terminal amino acids from various peptides. In Thioalkalivibrio sulfidiphilus (strain HL-EbGR7), this protein is Probable cytosol aminopeptidase.